We begin with the raw amino-acid sequence, 306 residues long: uncharacterized protein (306 aa).

The tract at residues His-40 to Glu-156 is disordered. Positions Glu-64–Leu-73 are enriched in low complexity. Positions Lys-129–Ser-139 are enriched in basic residues.

This is an uncharacterized protein from Rattus norvegicus (Rat).